We begin with the raw amino-acid sequence, 512 residues long: Maturase K (512 aa).

This sequence belongs to the intron maturase 2 family. MatK subfamily.

It localises to the plastid. The protein resides in the chloroplast. In terms of biological role, usually encoded in the trnK tRNA gene intron. Probably assists in splicing its own and other chloroplast group II introns. This Lemna aequinoctialis (Lesser duckweed) protein is Maturase K.